We begin with the raw amino-acid sequence, 282 residues long: Farnesyl diphosphate synthase (282 aa).

Isopentenyl diphosphate is bound by residues K45, R48, and H77. Positions 84 and 90 each coordinate Mg(2+). Residue R95 coordinates (2E)-geranyl diphosphate. R96 lines the isopentenyl diphosphate pocket. (2E)-geranyl diphosphate is bound by residues K181, T182, and Q220.

Belongs to the FPP/GGPP synthase family. Mg(2+) serves as cofactor.

It is found in the cytoplasm. It catalyses the reaction isopentenyl diphosphate + (2E)-geranyl diphosphate = (2E,6E)-farnesyl diphosphate + diphosphate. The protein is Farnesyl diphosphate synthase (ispA) of Buchnera aphidicola subsp. Acyrthosiphon pisum (strain APS) (Acyrthosiphon pisum symbiotic bacterium).